The following is a 273-amino-acid chain: Ribosomal RNA small subunit methyltransferase A (273 aa).

S-adenosyl-L-methionine is bound by residues N18, L20, G45, E66, D91, and N113.

Belongs to the class I-like SAM-binding methyltransferase superfamily. rRNA adenine N(6)-methyltransferase family. RsmA subfamily.

The protein localises to the cytoplasm. It catalyses the reaction adenosine(1518)/adenosine(1519) in 16S rRNA + 4 S-adenosyl-L-methionine = N(6)-dimethyladenosine(1518)/N(6)-dimethyladenosine(1519) in 16S rRNA + 4 S-adenosyl-L-homocysteine + 4 H(+). Specifically dimethylates two adjacent adenosines (A1518 and A1519) in the loop of a conserved hairpin near the 3'-end of 16S rRNA in the 30S particle. May play a critical role in biogenesis of 30S subunits. This chain is Ribosomal RNA small subunit methyltransferase A, found in Salmonella choleraesuis (strain SC-B67).